Consider the following 162-residue polypeptide: tRNA (cytidine(34)-2'-O)-methyltransferase (162 aa).

Residues leucine 83, glycine 105, isoleucine 127, and serine 135 each coordinate S-adenosyl-L-methionine.

It belongs to the class IV-like SAM-binding methyltransferase superfamily. RNA methyltransferase TrmH family. TrmL subfamily. In terms of assembly, homodimer.

The protein resides in the cytoplasm. It carries out the reaction cytidine(34) in tRNA + S-adenosyl-L-methionine = 2'-O-methylcytidine(34) in tRNA + S-adenosyl-L-homocysteine + H(+). The catalysed reaction is 5-carboxymethylaminomethyluridine(34) in tRNA(Leu) + S-adenosyl-L-methionine = 5-carboxymethylaminomethyl-2'-O-methyluridine(34) in tRNA(Leu) + S-adenosyl-L-homocysteine + H(+). Methylates the ribose at the nucleotide 34 wobble position in the two leucyl isoacceptors tRNA(Leu)(CmAA) and tRNA(Leu)(cmnm5UmAA). Catalyzes the methyl transfer from S-adenosyl-L-methionine to the 2'-OH of the wobble nucleotide. In Yersinia pestis, this protein is tRNA (cytidine(34)-2'-O)-methyltransferase.